The primary structure comprises 428 residues: Diaminopimelate decarboxylase (428 aa).

N6-(pyridoxal phosphate)lysine is present on Lys-64. Pyridoxal 5'-phosphate is bound by residues Gly-239 and 281–284 (EPGR). Residues Arg-284, Arg-319, and Tyr-323 each coordinate substrate. Cys-350 (proton donor) is an active-site residue. 2 residues coordinate substrate: Glu-351 and Tyr-379. Tyr-379 is a pyridoxal 5'-phosphate binding site.

This sequence belongs to the Orn/Lys/Arg decarboxylase class-II family. LysA subfamily. In terms of assembly, homodimer. Requires pyridoxal 5'-phosphate as cofactor.

It carries out the reaction meso-2,6-diaminopimelate + H(+) = L-lysine + CO2. It functions in the pathway amino-acid biosynthesis; L-lysine biosynthesis via DAP pathway; L-lysine from DL-2,6-diaminopimelate: step 1/1. In terms of biological role, specifically catalyzes the decarboxylation of meso-diaminopimelate (meso-DAP) to L-lysine. The protein is Diaminopimelate decarboxylase of Methanothermobacter thermautotrophicus (strain ATCC 29096 / DSM 1053 / JCM 10044 / NBRC 100330 / Delta H) (Methanobacterium thermoautotrophicum).